A 112-amino-acid chain; its full sequence is Large ribosomal subunit protein uL22 (112 aa).

It belongs to the universal ribosomal protein uL22 family. As to quaternary structure, part of the 50S ribosomal subunit.

Functionally, this protein binds specifically to 23S rRNA; its binding is stimulated by other ribosomal proteins, e.g. L4, L17, and L20. It is important during the early stages of 50S assembly. It makes multiple contacts with different domains of the 23S rRNA in the assembled 50S subunit and ribosome. The globular domain of the protein is located near the polypeptide exit tunnel on the outside of the subunit, while an extended beta-hairpin is found that lines the wall of the exit tunnel in the center of the 70S ribosome. The chain is Large ribosomal subunit protein uL22 from Nitratidesulfovibrio vulgaris (strain ATCC 29579 / DSM 644 / CCUG 34227 / NCIMB 8303 / VKM B-1760 / Hildenborough) (Desulfovibrio vulgaris).